Reading from the N-terminus, the 112-residue chain is Large ribosomal subunit protein bL20c (112 aa).

It belongs to the bacterial ribosomal protein bL20 family.

The protein resides in the plastid. It localises to the chloroplast. Its function is as follows. Binds directly to 23S ribosomal RNA and is necessary for the in vitro assembly process of the 50S ribosomal subunit. It is not involved in the protein synthesizing functions of that subunit. The sequence is that of Large ribosomal subunit protein bL20c (rpl20) from Anthoceros angustus (Hornwort).